The sequence spans 163 residues: Peptidyl-prolyl cis-trans isomerase (163 aa).

Residues 5–162 (YFDVSSNGKP…SVLKIEDCGT (158 aa)) enclose the PPIase cyclophilin-type domain.

The protein belongs to the cyclophilin-type PPIase family. PPIase A subfamily.

Its subcellular location is the cytoplasm. It catalyses the reaction [protein]-peptidylproline (omega=180) = [protein]-peptidylproline (omega=0). With respect to regulation, binds cyclosporin A (CsA). CsA mediates some of its effects via an inhibitory action on PPIase. Functionally, PPIases accelerate the folding of proteins. It catalyzes the cis-trans isomerization of proline imidic peptide bonds in oligopeptides. The protein is Peptidyl-prolyl cis-trans isomerase (PIG28) of Uromyces fabae (Rust fungus).